The chain runs to 264 residues: Sec-independent protein translocase protein TatC (264 aa).

The next 6 helical transmembrane spans lie at 20–40, 85–105, 131–151, 175–195, 211–231, and 232–252; these read VVVI…EPAE, FFAQ…PVAV, AVGL…PYIL, FVLQ…VMFA, IRYA…DGSG, and VTMW…MFFA.

Belongs to the TatC family. Forms a complex with TatA.

It is found in the cell membrane. Its function is as follows. Part of the twin-arginine translocation (Tat) system that transports large folded proteins containing a characteristic twin-arginine motif in their signal peptide across membranes. The polypeptide is Sec-independent protein translocase protein TatC (Cenarchaeum symbiosum (strain A)).